A 100-amino-acid chain; its full sequence is Large ribosomal subunit protein uL23 (100 aa).

The protein belongs to the universal ribosomal protein uL23 family. Part of the 50S ribosomal subunit. Contacts protein L29, and trigger factor when it is bound to the ribosome.

One of the early assembly proteins it binds 23S rRNA. One of the proteins that surrounds the polypeptide exit tunnel on the outside of the ribosome. Forms the main docking site for trigger factor binding to the ribosome. In Shewanella pealeana (strain ATCC 700345 / ANG-SQ1), this protein is Large ribosomal subunit protein uL23.